The primary structure comprises 246 residues: MSGHILTVGLIVVVAHCATLSSSASTIPIQSQGKDFPVPFVSEQTDDFYDDKFYPDISDDNINEVVRDNGRKGGDRGRQSTPSGKESHPSATQTGGRRPSQSPCGESRPSGSATSGRRPSQSPRGESLPPATLAGRQNSRQQDRRQNKKQPDLSKYKNSPARYIFTTGNVDSGKTPDEERIFRTNRAEYVLATGGPYDNYLVEIIDGPNPNDISLKQSTTMGGDSKLILDNPNRNTIVGRIKTFKA.

An N-terminal signal peptide occupies residues 1–23 (MSGHILTVGLIVVVAHCATLSSS). The disordered stretch occupies residues 51 to 160 (DKFYPDISDD…PDLSKYKNSP (110 aa)). Basic and acidic residues predominate over residues 65–78 (VVRDNGRKGGDRGR). Over residues 79 to 124 (QSTPSGKESHPSATQTGGRRPSQSPCGESRPSGSATSGRRPSQSPR) the composition is skewed to polar residues. Residues 141–155 (QQDRRQNKKQPDLSK) show a composition bias toward basic and acidic residues.

As to quaternary structure, interacts with human DSG1. Interacts with human DSG3. In terms of tissue distribution, salivary gland (at protein level).

It localises to the secreted. Its function is as follows. Down-regulates the expression of CD86 and HLA-DR on the surface of lipopolysaccharide (LPS)-stimulated human peripheral blood mononuclear cells (PBMCs). Reduces LPS-induced secretion of IL-1beta/IL1B in human PBMCs. Reduces LPS-induced secretion of various cytokines, such as IL-1beta, TNF-alpha/TNF, MCP-1/CCL2, IL6, IL27 and IL-1alpha/IL1A, in host cultured macrophages probably via inhibition of NF-kappa-B signaling pathway. Reduces production of IFN-gamma/IFNG, IL4 and IL6 in human lymphocytes activated with PMA/ionomycin. Exhibits anti-inflammatory activity in carrageenan-induced paw edema model in rats. The polypeptide is Salivary antigen SP32 (Phlebotomus papatasi (Sandfly)).